A 629-amino-acid chain; its full sequence is Transmembrane 9 superfamily protein C1105.08 (629 aa).

The N-terminal stretch at 1–26 is a signal peptide; the sequence is MLLPSIPSCSFSFVVFVSVLLQTCFS. The Lumenal portion of the chain corresponds to 27-266; the sequence is FQLTPLSPKN…MHIESRQIRW (240 aa). An N-linked (GlcNAc...) asparagine glycan is attached at Asn157. Residues 267–287 traverse the membrane as a helical segment; sequence IFIIHSAIIDTFLIFVVSIIL. Residues 288–337 lie on the Cytoplasmic side of the membrane; sequence YRTLNRDINKYNSAFVDQEDVQEDFGWKLVHGDVFRPPRRPMLFSILLGT. Residues 338 to 358 form a helical membrane-spanning segment; the sequence is GAQLLFMSSGIVLFAIFGIVA. Residues 359-364 are Lumenal-facing; sequence PSRRGS. The chain crosses the membrane as a helical span at residues 365–385; it reads LATATVALFIISGFVSGYVSA. Topologically, residues 386–401 are cytoplasmic; sequence LSYKLMQGMLRKRNLL. Residues 402–422 traverse the membrane as a helical segment; it reads LTPFVVPGFMLAAALFFNMVF. At 423 to 436 the chain is on the lumenal side; it reads WSKSSSSTVPFSSW. A helical transmembrane segment spans residues 437–457; that stretch reads LLLIFLYLLFTVPLSFVGSLI. Topologically, residues 458–488 are cytoplasmic; that stretch reads GFRSREFVPPVRTNQIPRQIPSHSIWLSSFP. A helical transmembrane segment spans residues 489-509; the sequence is SAIIGGSIPFLVILIELFSIL. Topologically, residues 510–519 are lumenal; that stretch reads DSLWFHPLYF. The helical transmembrane segment at 520–544 threads the bilayer; that stretch reads MFGFSFFCFGILVTTCIMVSIITVY. Topologically, residues 545 to 558 are cytoplasmic; it reads FQLCSENYNWWWRS. The chain crosses the membrane as a helical span at residues 559 to 579; it reads FITPGFCGIYVFIFSVFYWFF. Topologically, residues 580–598 are lumenal; sequence KISSSSLATAVLYFGYSLL. The chain crosses the membrane as a helical span at residues 599-619; sequence ISVLVFFLCGSVGFFGAFLFV. At 620-629 the chain is on the cytoplasmic side; sequence NKIYASIKID.

This sequence belongs to the nonaspanin (TM9SF) (TC 9.A.2) family.

It is found in the golgi apparatus membrane. Its subcellular location is the vacuole membrane. This chain is Transmembrane 9 superfamily protein C1105.08, found in Schizosaccharomyces pombe (strain 972 / ATCC 24843) (Fission yeast).